Reading from the N-terminus, the 432-residue chain is MEAEPSQPPNGSWPLGQNGSDVETSMATSLTFSSYYQHSSPVAAMFIAAYVLIFLLCMVGNTLVCFIVLKNRHMRTVTNMFILNLAVSDLLVGIFCMPTTLVDNLITGWPFDNATCKMSGLVQGMSVSASVFTLVAIAVERFRCIVHPFREKLTLRKALFTIAVIWALALLIMCPSAVTLTVTREEHHFMLDARNRSYPLYSCWEAWPEKGMRKVYTAVLFAHIYLVPLALIVVMYVRIARKLCQAPGPARDTEEAVAEGGRTSRRRARVVHMLVMVALFFTLSWLPLWVLLLLIDYGELSELQLHLLSVYAFPLAHWLAFFHSSANPIIYGYFNENFRRGFQAAFRAQLCWPPWAAHKQAYSERPNRLLRRRVVVDVQPSDSGLPSESGPSSGVPGPGRLPLRNGRVAHQDGPGEGPGCNHMPLTIPAWNI.

The Extracellular segment spans residues 1-43 (MEAEPSQPPNGSWPLGQNGSDVETSMATSLTFSSYYQHSSPVA). Asn10 and Asn18 each carry an N-linked (GlcNAc...) asparagine glycan. Residues 44–64 (AMFIAAYVLIFLLCMVGNTLV) form a helical membrane-spanning segment. Topologically, residues 65–80 (CFIVLKNRHMRTVTNM) are cytoplasmic. The helical transmembrane segment at 81–101 (FILNLAVSDLLVGIFCMPTTL) threads the bilayer. Residues 102–117 (VDNLITGWPFDNATCK) are Extracellular-facing. N-linked (GlcNAc...) asparagine glycosylation is present at Asn113. A disulfide bond links Cys116 and Cys203. A helical transmembrane segment spans residues 118–138 (MSGLVQGMSVSASVFTLVAIA). Residues 139–158 (VERFRCIVHPFREKLTLRKA) are Cytoplasmic-facing. Residues 159 to 179 (LFTIAVIWALALLIMCPSAVT) traverse the membrane as a helical segment. Residues 180-214 (LTVTREEHHFMLDARNRSYPLYSCWEAWPEKGMRK) are Extracellular-facing. Asn195 carries N-linked (GlcNAc...) asparagine glycosylation. A helical transmembrane segment spans residues 215-235 (VYTAVLFAHIYLVPLALIVVM). Residues 236 to 273 (YVRIARKLCQAPGPARDTEEAVAEGGRTSRRRARVVHM) lie on the Cytoplasmic side of the membrane. Residues 274–294 (LVMVALFFTLSWLPLWVLLLL) traverse the membrane as a helical segment. The Extracellular portion of the chain corresponds to 295-309 (IDYGELSELQLHLLS). The helical transmembrane segment at 310-330 (VYAFPLAHWLAFFHSSANPII) threads the bilayer. The Cytoplasmic portion of the chain corresponds to 331 to 432 (YGYFNENFRR…MPLTIPAWNI (102 aa)). Low complexity predominate over residues 380 to 406 (PSDSGLPSESGPSSGVPGPGRLPLRNG). The tract at residues 380 to 422 (PSDSGLPSESGPSSGVPGPGRLPLRNGRVAHQDGPGEGPGCNH) is disordered.

Belongs to the G-protein coupled receptor 1 family. In terms of tissue distribution, expressed at high levels in the hypothalamus. Moderate levels found in the midbrain, thalamus, medulla oblongata, testis, eye, whole brain, cerebral cortex, striatum, hippocampus, cerebellum, optic nerve, placenta, spinal cord, pituitary gland and ovary.

It is found in the cell membrane. Receptor for NPAF (A-18-F-amide) and NPFF (F-8-F-amide) neuropeptides, also known as morphine-modulating peptides. Can also be activated by a variety of naturally occurring or synthetic FMRF-amide like ligands. This receptor mediates its action by association with G proteins that activate a phosphatidylinositol-calcium second messenger system. This chain is Neuropeptide FF receptor 1 (Npffr1), found in Rattus norvegicus (Rat).